Here is a 241-residue protein sequence, read N- to C-terminus: Polycomb group RING finger protein 3 (241 aa).

The segment at 17–56 (CRLCSGYLIDATTVTECLHTFCRSCLVKYLEENNTCPTCR) adopts an RING-type zinc-finger fold. The disordered stretch occupies residues 115 to 148 (AKQHLDPRNGETKADDNSNKETAEEKQEEDNDYH). Basic and acidic residues predominate over residues 117-139 (QHLDPRNGETKADDNSNKETAEE). An interaction with BCORL1 region spans residues 131-241 (NSNKETAEEK…LHYRPKMDLL (111 aa)).

Component of a PRC1-like complex that contains PCGF3, RNF2 and RYBP. Interacts with RNF2. Interacts with CBX6, CBX7 and CBX8. Interacts with BCORL1.

Its subcellular location is the nucleus. It localises to the nucleoplasm. In terms of biological role, component of a Polycomb group (PcG) multiprotein PRC1-like complex, a complex class required to maintain the transcriptionally repressive state of many genes, including Hox genes, throughout development. PcG PRC1 complex acts via chromatin remodeling and modification of histones; it mediates monoubiquitination of histone H2A 'Lys-119', rendering chromatin heritably changed in its expressibility. Within the PRC1-like complex, regulates RNF2 ubiquitin ligase activity. Plays a redundant role with PCGF5 as part of a PRC1-like complex that mediates monoubiquitination of histone H2A 'Lys-119' on the X chromosome and is required for normal silencing of one copy of the X chromosome in XX females. This chain is Polycomb group RING finger protein 3 (PcgF3), found in Mus musculus (Mouse).